We begin with the raw amino-acid sequence, 902 residues long: DNA mismatch repair protein MutS (902 aa).

An ATP-binding site is contributed by 647-654; the sequence is GPNMGGKS.

Belongs to the DNA mismatch repair MutS family.

In terms of biological role, this protein is involved in the repair of mismatches in DNA. It is possible that it carries out the mismatch recognition step. This protein has a weak ATPase activity. This Nitrosospira multiformis (strain ATCC 25196 / NCIMB 11849 / C 71) protein is DNA mismatch repair protein MutS.